The chain runs to 670 residues: DNA ligase (670 aa).

NAD(+) contacts are provided by residues 35 to 39 (DSVYD), 84 to 85 (SL), and Glu116. Catalysis depends on Lys118, which acts as the N6-AMP-lysine intermediate. Arg139, Glu176, Lys293, and Lys317 together coordinate NAD(+). 4 residues coordinate Zn(2+): Cys411, Cys414, Cys429, and Cys435. The BRCT domain maps to 592-670 (VVKSEIAGKT…EEAFLKLLKS (79 aa)).

It belongs to the NAD-dependent DNA ligase family. LigA subfamily. Mg(2+) is required as a cofactor. Mn(2+) serves as cofactor.

The catalysed reaction is NAD(+) + (deoxyribonucleotide)n-3'-hydroxyl + 5'-phospho-(deoxyribonucleotide)m = (deoxyribonucleotide)n+m + AMP + beta-nicotinamide D-nucleotide.. In terms of biological role, DNA ligase that catalyzes the formation of phosphodiester linkages between 5'-phosphoryl and 3'-hydroxyl groups in double-stranded DNA using NAD as a coenzyme and as the energy source for the reaction. It is essential for DNA replication and repair of damaged DNA. This Coxiella burnetii (strain Dugway 5J108-111) protein is DNA ligase.